The primary structure comprises 63 residues: Large ribosomal subunit protein uL29 (63 aa).

It belongs to the universal ribosomal protein uL29 family.

This Yersinia enterocolitica serotype O:8 / biotype 1B (strain NCTC 13174 / 8081) protein is Large ribosomal subunit protein uL29.